The sequence spans 742 residues: Conidiogenone synthase (742 aa).

Positions 1–332 (MGETIADVYA…SLCVPRYFKV (332 aa)) are terpene cyclase. Position 97 (D97) interacts with Mg(2+). Residues D97, 190 to 193 (RIVD), N234, 238 to 242 (SWDKE), and 328 to 329 (RY) contribute to the substrate site. The short motif at 97-101 (DDETD) is the DDXXD 1 element. An NSE/DTE motif is present at residues 234–242 (NDLFSWDKE). Positions 333–742 (ERNPYKDHLE…LRAMEEASQK (410 aa)) are prenyltransferase. Isopentenyl diphosphate is bound by residues K414, R417, and H446. 2 residues coordinate Mg(2+): D453 and D457. The DDXXD 2 motif lies at 453–457 (DDIQD). R462 contacts dimethylallyl diphosphate. Residue R463 participates in isopentenyl diphosphate binding. Dimethylallyl diphosphate is bound by residues K539, T540, Q575, N582, K592, and K602. Residues 701-724 (EAHKSDSAWKVNQRRAWKGSQKNG) are disordered.

In the N-terminal section; belongs to the terpene synthase family. This sequence in the C-terminal section; belongs to the FPP/GGPP synthase family. In terms of assembly, hexamer. The cofactor is Mg(2+).

It catalyses the reaction isopentenyl diphosphate + (2E,6E)-farnesyl diphosphate = (2E,6E,10E)-geranylgeranyl diphosphate + diphosphate. The protein operates within secondary metabolite biosynthesis; terpenoid biosynthesis. Functionally, bifunctional terpene synthase; part of the gene cluster that mediates the biosynthesis of conidiogenone, a diterpene known to induce the conidiation. The bifunctional terpene synthase PrDS converts isopentenyl diphosphate (IPP) and dimethylallyl diphosphate (DMAPP) into deoxyconidiogenol. The C-terminal prenyltransferase (PT) domain of PrDS catalyzes formation of GGPP, whereas the N-terminal terpene cyclase (TC) domain catalyzes the cyclization of GGPP into deoxyconidiogenol. The cytochrome P450 monooxygenase PrP450 then catalyzes two rounds of oxidation to furnish conidiogenone. This is Conidiogenone synthase from Penicillium roqueforti (strain FM164).